Here is a 529-residue protein sequence, read N- to C-terminus: Listeriolysin O (529 aa).

Residues 1–24 (MKKIMLVFITLILVSLPIAQQTEA) form the signal peptide. The segment at 35 to 54 (SISSMAPPASPPASPKTPIE) is disordered. A run of 4 beta stranded transmembrane segments spans residues 214 to 227 (ESQL…AFKA), 234 to 243 (VNFGAISEGK), 312 to 321 (STKVKAAFDA), and 329 to 341 (SGDV…IKNS). The Conserved undecapeptide signature appears at 483–493 (ECTGLAWEWWR). The Cholesterol binding signature appears at 515–516 (TL).

The protein belongs to the cholesterol-dependent cytolysin family. In terms of assembly, homooligomeric pore complex of 35 to 50 subunits; when inserted in the host membrane.

It is found in the secreted. The protein localises to the host membrane. It localises to the host cell membrane. With respect to regulation, activity of listeriolysin O is regulated on multiple levels. It should be high in the phagosome, thereby allowing escape of the bacteria from the phagosomal compartment. Then, once inside the host cytosol, the activity must be controlled to prevent lysis of the host plasma membrane and loss of the intracellular environment. A cholesterol-dependent toxin that causes cytolysis by forming pores in cholesterol containing host membranes. After binding to target membranes, the protein undergoes a major conformation change, leading to its insertion in the host membrane and formation of an oligomeric pore complex. Cholesterol is required for binding to host membranes, membrane insertion and pore formation; cholesterol binding is mediated by a Thr-Leu pair in the C-terminus. Acts as a major virulence factor required for the escape of bacteria from phagosomal vacuoles and entry into the host cytosol. Can be reversibly inactivated by oxidation. The protein is Listeriolysin O (hly) of Listeria monocytogenes serotype 1/2a (strain 08-5578).